The primary structure comprises 443 residues: KICSTOR complex protein ITFG2 (443 aa).

Residues 19–48 form an FG-GAP 1; atypical repeat; it reads FPHAICLGDVDNDALNELVVGDTSGKLSVY. S104 is subject to Phosphoserine. The stretch at 125 to 154 is one FG-GAP 2; atypical repeat; sequence NTKVMLISDIDGDGCYELVVGYTDRVVRAF. Position 219 is a phosphoserine (S219).

As to quaternary structure, part of the KICSTOR complex composed of KPTN, ITFG2, KICS2 and SZT2. SZT2 probably serves as a link between the other three proteins in the KICSTOR complex and may mediate the direct interaction with the GATOR complex via GATOR1. The KICSTOR complex interacts directly with the GATOR1 complex and most probably indirectly with the GATOR2 complex in an amino acid-independent manner.

It localises to the lysosome membrane. Functionally, as part of the KICSTOR complex functions in the amino acid-sensing branch of the TORC1 signaling pathway. Recruits, in an amino acid-independent manner, the GATOR1 complex to the lysosomal membranes and allows its interaction with GATOR2 and the RAG GTPases. Functions upstream of the RAG GTPases and is required to negatively regulate mTORC1 signaling in absence of amino acids. In absence of the KICSTOR complex mTORC1 is constitutively localized to the lysosome and activated. The KICSTOR complex is also probably involved in the regulation of mTORC1 by glucose. This Mus musculus (Mouse) protein is KICSTOR complex protein ITFG2.